The sequence spans 163 residues: Nucleotide-binding protein Bcer98_0876 (163 aa).

It belongs to the YajQ family.

Functionally, nucleotide-binding protein. The polypeptide is Nucleotide-binding protein Bcer98_0876 (Bacillus cytotoxicus (strain DSM 22905 / CIP 110041 / 391-98 / NVH 391-98)).